The following is a 143-amino-acid chain: Large ribosomal subunit protein uL11 (143 aa).

This sequence belongs to the universal ribosomal protein uL11 family. As to quaternary structure, part of the ribosomal stalk of the 50S ribosomal subunit. Interacts with L10 and the large rRNA to form the base of the stalk. L10 forms an elongated spine to which L12 dimers bind in a sequential fashion forming a multimeric L10(L12)X complex. Post-translationally, one or more lysine residues are methylated.

Its function is as follows. Forms part of the ribosomal stalk which helps the ribosome interact with GTP-bound translation factors. This Erythrobacter litoralis (strain HTCC2594) protein is Large ribosomal subunit protein uL11.